The chain runs to 295 residues: Cop9 signalosome-interactor 1 (295 aa).

As to quaternary structure, component of a COP9 signalosome-like (CSN) complex, composed of RRI1/CSN5, CSN9, RRI2/CSN10, PCI8/CSN11, CSN12 and CSI1. In the complex, it probably interacts directly with CSN9 and CSN12. Interacts also with RPN5.

It is found in the cytoplasm. The protein localises to the nucleus. Its function is as follows. Component of the COP9 signalosome (CSN) complex that acts as an regulator of the ubiquitin (Ubl) conjugation pathway by mediating the deneddylation of the cullin subunit of SCF-type E3 ubiquitin-protein ligase complexes The CSN complex is involved in the regulation of the mating pheromone response. The polypeptide is Cop9 signalosome-interactor 1 (CSI1) (Saccharomyces cerevisiae (strain ATCC 204508 / S288c) (Baker's yeast)).